The sequence spans 1410 residues: ABC transporter C family member 13 (1410 aa).

The next 8 membrane-spanning stretches (helical) occupy residues Ile23–Thr43, Leu60–Val80, Val88–Leu108, Ile122–Phe142, Gln148–Ile168, Leu391–Ile411, Val474–Leu494, and Phe505–Ile525. An ABC transmembrane type-1 1 domain is found at Cys255–Asp530. Residues Val564–Glu791 enclose the ABC transporter 1 domain. Gly602–Thr609 contacts ATP. 6 consecutive transmembrane segments (helical) span residues Ala844 to Gly864, Thr889 to Val909, Ser963 to Leu985, Val990 to Phe1009, Ile1087 to Phe1107, and Gly1111 to Leu1131. In terms of domain architecture, ABC transmembrane type-1 2 spans Thr852–Lys1139. An ABC transporter 2 domain is found at Val1174–Arg1407. Gly1208 to Ser1215 is a binding site for ATP.

It belongs to the ABC transporter superfamily. ABCC family. Conjugate transporter (TC 3.A.1.208) subfamily. In terms of tissue distribution, ubiquitous.

Its subcellular location is the membrane. It catalyses the reaction ATP + H2O + xenobioticSide 1 = ADP + phosphate + xenobioticSide 2.. Pump for glutathione S-conjugates. The protein is ABC transporter C family member 13 (ABCC13) of Arabidopsis thaliana (Mouse-ear cress).